We begin with the raw amino-acid sequence, 218 residues long: Capsid protein (218 aa).

The residue at position 1 (methionine 1) is an N-acetylmethionine; by host. Residues 1 to 10 (MDKSESTSAG) show a composition bias toward low complexity. The segment at 1-30 (MDKSESTSAGRNRRRRPRRGSRSASSSSDA) is disordered. Basic residues predominate over residues 11 to 21 (RNRRRRPRRGS).

Belongs to the cucumovirus capsid protein family.

It localises to the virion. Functionally, capsid protein. Probably binds RNA and plays a role in packaging. This Cucumis sativus (Cucumber) protein is Capsid protein.